The chain runs to 95 residues: Aspartyl/glutamyl-tRNA(Asn/Gln) amidotransferase subunit C (95 aa).

Belongs to the GatC family. Heterotrimer of A, B and C subunits.

It catalyses the reaction L-glutamyl-tRNA(Gln) + L-glutamine + ATP + H2O = L-glutaminyl-tRNA(Gln) + L-glutamate + ADP + phosphate + H(+). The enzyme catalyses L-aspartyl-tRNA(Asn) + L-glutamine + ATP + H2O = L-asparaginyl-tRNA(Asn) + L-glutamate + ADP + phosphate + 2 H(+). Functionally, allows the formation of correctly charged Asn-tRNA(Asn) or Gln-tRNA(Gln) through the transamidation of misacylated Asp-tRNA(Asn) or Glu-tRNA(Gln) in organisms which lack either or both of asparaginyl-tRNA or glutaminyl-tRNA synthetases. The reaction takes place in the presence of glutamine and ATP through an activated phospho-Asp-tRNA(Asn) or phospho-Glu-tRNA(Gln). This chain is Aspartyl/glutamyl-tRNA(Asn/Gln) amidotransferase subunit C, found in Chlorobium luteolum (strain DSM 273 / BCRC 81028 / 2530) (Pelodictyon luteolum).